We begin with the raw amino-acid sequence, 181 residues long: ATP synthase subunit delta (181 aa).

The protein belongs to the ATPase delta chain family. As to quaternary structure, F-type ATPases have 2 components, F(1) - the catalytic core - and F(0) - the membrane proton channel. F(1) has five subunits: alpha(3), beta(3), gamma(1), delta(1), epsilon(1). F(0) has three main subunits: a(1), b(2) and c(10-14). The alpha and beta chains form an alternating ring which encloses part of the gamma chain. F(1) is attached to F(0) by a central stalk formed by the gamma and epsilon chains, while a peripheral stalk is formed by the delta and b chains.

Its subcellular location is the cell membrane. F(1)F(0) ATP synthase produces ATP from ADP in the presence of a proton or sodium gradient. F-type ATPases consist of two structural domains, F(1) containing the extramembraneous catalytic core and F(0) containing the membrane proton channel, linked together by a central stalk and a peripheral stalk. During catalysis, ATP synthesis in the catalytic domain of F(1) is coupled via a rotary mechanism of the central stalk subunits to proton translocation. In terms of biological role, this protein is part of the stalk that links CF(0) to CF(1). It either transmits conformational changes from CF(0) to CF(1) or is implicated in proton conduction. The sequence is that of ATP synthase subunit delta from Mycoplasma mycoides subsp. mycoides SC (strain CCUG 32753 / NCTC 10114 / PG1).